The following is a 220-amino-acid chain: MAYRDQPLGELALSIPRASALFRQYDMDYCCGGKQTLARAAARHDVDIDIIEAQLAQLAEQPIEKDWRAVPLADIIDHIVVRYHDRHREQLPELILQATKVERVHADKPNVPRGLTKYLTALHEELSSHMMKEEQILFPMIKQGMGRQATGPISVMESEHDEAGELVDVIKHVTQNVTPPPEACTTWKAMYNGINEMIDDLMEHISLENNVLFPRALAGE.

It belongs to the RIC family. YtfE subfamily. In terms of assembly, homodimer.

Its subcellular location is the cytoplasm. Its function is as follows. Di-iron-containing protein involved in the repair of iron-sulfur clusters damaged by oxidative and nitrosative stress conditions. The polypeptide is Iron-sulfur cluster repair protein YtfE (Salmonella paratyphi A (strain AKU_12601)).